Reading from the N-terminus, the 144-residue chain is MPRYREWDLACKVYVGNLGSSASKHEIEGAFAKYGPLRNVWVARNPPGFAFVEFEDRRDAEDATRALDGTRCCGTRIRVEMSSGRSRDRRRGEGGSSGRSGSGRYRITPSARTTSTATSSFYNINNLQQQPSSQPQPATFNLQL.

One can recognise an RRM domain in the interval 11 to 84 (CKVYVGNLGS…TRIRVEMSSG (74 aa)). Positions 78–115 (RVEMSSGRSRDRRRGEGGSSGRSGSGRYRITPSARTTS) are disordered.

This sequence belongs to the splicing factor SR family. Interacts with x16 (via Arg/Ser-rich region). In terms of processing, extensively phosphorylated on serine residues in the RS domain. The tandem heptapeptide repeats in the C-terminal domain (CTD) can be highly phosphorylated. The phosphorylation activates Pol II. Phosphorylation occurs at residues 'Ser-2', 'Ser-5' and 'Ser-7' of the heptapeptide repeat and is mediated by P-TEFb. Dephosphorylated by the INTAC complex when transcripts are unfavorably configured for transcriptional elongation, leading to premature transcription termination: dephosphorylation is mediated by the mts/PP2A component of the INTAC complex. Ubiquitous.

It is found in the nucleus. In terms of biological role, contributes to the activation of female-specific DSX splicing in vivo by recognizing the RBP1 target sequences within the purine-rich polypyrimidine tract of the female-specific 3' splice site. The sequence is that of RNA-binding protein 1 (Rbp1) from Drosophila melanogaster (Fruit fly).